A 930-amino-acid polypeptide reads, in one-letter code: Serine/threonine-protein kinase ATG1 (930 aa).

A Protein kinase domain is found at 23-326; it reads FIIDREIGKG…FENFFAHHVV (304 aa). ATP is bound by residues 29 to 37 and lysine 52; that span reads IGKGSFAQV. The active-site Proton acceptor is the aspartate 166. 4 disordered regions span residues 336–468, 504–563, 853–874, and 904–930; these read DDIP…TEEE, GQNN…SASP, ISSG…DTEE, and NQAK…YGST. Over residues 337 to 350 the composition is skewed to basic and acidic residues; sequence DIPKPPKRELETIR. Over residues 377–393 the composition is skewed to low complexity; the sequence is SPKSPRSSPRSSTVNSS. Polar residues-rich tracts occupy residues 400–417 and 504–531; these read RQSQ…HNSG and GQNN…TTGA. Residues 629–897 form an ATG13-binding region; it reads AAQAIEEFAT…RLNMVRKKQQ (269 aa).

This sequence belongs to the protein kinase superfamily. Ser/Thr protein kinase family. APG1/unc-51/ULK1 subfamily. In terms of assembly, homodimer. Dimerization requires the presence of ATG13. Forms a ternary complex with ATG13 and ATG17.

It is found in the cytoplasm. The protein resides in the preautophagosomal structure membrane. It carries out the reaction L-seryl-[protein] + ATP = O-phospho-L-seryl-[protein] + ADP + H(+). The enzyme catalyses L-threonyl-[protein] + ATP = O-phospho-L-threonyl-[protein] + ADP + H(+). In terms of biological role, serine/threonine protein kinase involved in the cytoplasm to vacuole transport (Cvt) and found to be essential in autophagy, where it is required for the formation of autophagosomes. Involved in the clearance of protein aggregates which cannot be efficiently cleared by the proteasome. Required for selective autophagic degradation of the nucleus (nucleophagy) as well as for mitophagy which contributes to regulate mitochondrial quantity and quality by eliminating the mitochondria to a basal level to fulfill cellular energy requirements and preventing excess ROS production. Also involved in endoplasmic reticulum-specific autophagic process, in selective removal of ER-associated degradation (ERAD) substrates. Plays a key role in ATG9 and ATG23 cycling through the pre-autophagosomal structure and is necessary to promote ATG18 binding to ATG9 through phosphorylation of ATG9. Catalyzes phosphorylation of ATG4, decreasing the interaction between ATG4 and ATG8 and impairing deconjugation of PE-conjugated forms of ATG8. Contributes to conidiation by regulating the conidial levels of the conidiation-related protein CP15 and mediates fungal oxidation resistance by controlling total superoxide dismutase (SOD) activity. This chain is Serine/threonine-protein kinase ATG1, found in Beauveria bassiana (strain ARSEF 2860) (White muscardine disease fungus).